The sequence spans 119 residues: Large ribosomal subunit protein uL18 (119 aa).

Residues 1-20 (MSQIDKASRRQKIKDRSRVK) form a disordered region. The segment covering 9-20 (RRQKIKDRSRVK) has biased composition (basic residues).

It belongs to the universal ribosomal protein uL18 family. As to quaternary structure, part of the 50S ribosomal subunit; part of the 5S rRNA/L5/L18/L25 subcomplex. Contacts the 5S and 23S rRNAs.

In terms of biological role, this is one of the proteins that bind and probably mediate the attachment of the 5S RNA into the large ribosomal subunit, where it forms part of the central protuberance. This is Large ribosomal subunit protein uL18 from Chlorobium phaeobacteroides (strain DSM 266 / SMG 266 / 2430).